Here is an 83-residue protein sequence, read N- to C-terminus: uncharacterized protein (83 aa).

This is an uncharacterized protein from Vaccinia virus (strain Copenhagen) (VACV).